Reading from the N-terminus, the 336-residue chain is UDP-N-acetylenolpyruvoylglucosamine reductase (336 aa).

The 172-residue stretch at 17 to 188 folds into the FAD-binding PCMH-type domain; sequence LRSLAERFVE…WDVTFRLPKK (172 aa). R164 is a catalytic residue. S237 acts as the Proton donor in catalysis. E332 is a catalytic residue.

The protein belongs to the MurB family. The cofactor is FAD.

The protein localises to the cytoplasm. It catalyses the reaction UDP-N-acetyl-alpha-D-muramate + NADP(+) = UDP-N-acetyl-3-O-(1-carboxyvinyl)-alpha-D-glucosamine + NADPH + H(+). It functions in the pathway cell wall biogenesis; peptidoglycan biosynthesis. In terms of biological role, cell wall formation. This Bdellovibrio bacteriovorus (strain ATCC 15356 / DSM 50701 / NCIMB 9529 / HD100) protein is UDP-N-acetylenolpyruvoylglucosamine reductase.